A 140-amino-acid chain; its full sequence is Ribosome maturation factor RimP (140 aa).

This sequence belongs to the RimP family.

The protein localises to the cytoplasm. Required for maturation of 30S ribosomal subunits. This Campylobacter fetus subsp. fetus (strain 82-40) protein is Ribosome maturation factor RimP.